A 507-amino-acid polypeptide reads, in one-letter code: MLLHDVAITSMDVAATSSRLTKVARIAALLHRAAPDTQLVTIIVSWLSGELPQRHIGVGWAALRSLPPPAPQPALTVTGVDATLSKIGTLSGKGSQAQRAALVAELFSAATEAEQTFLLRLLGGELRQGAKGGIMADAVAQAAGLPAATVQRAAMLGGDLAAAAAAGLSGAALDTFTLRVGRPIGPMLAQTATSVHDALERHGGTTIFEAKLDGARVQIHRANDQVRIYTRSLDDVTARLPEVVEATLALPVRDLVADGEAIALCPDNRPQRFQVTASRFGRSVDVAAARATQPLSVFFFDILHRDGTDLLEAPTTERLAALDALVPARHRVDRLITSDPTDAANFLDATLAAGHEGVMAKAPAARYLAGRRGAGWLKVKPVHTLDLVVLAVEWGSGRRRGKLSNIHLGARDPATGGFVMVGKTFKGMTDAMLDWQTTRFHEIAVGPTDGYVVQLRPEQVVEVALDGVQRSSRYPGGLALRFARVVRYRADKDPAEADTIDAVRALY.

Residue E209 participates in ATP binding. K211 acts as the N6-AMP-lysine intermediate in catalysis. Residues R216, R231, E260, F300, R372, and K378 each coordinate ATP.

This sequence belongs to the ATP-dependent DNA ligase family. Requires Mg(2+) as cofactor.

The catalysed reaction is ATP + (deoxyribonucleotide)n-3'-hydroxyl + 5'-phospho-(deoxyribonucleotide)m = (deoxyribonucleotide)n+m + AMP + diphosphate.. In terms of biological role, DNA ligase that seals nicks in double-stranded DNA during DNA replication, DNA recombination and DNA repair. The chain is Probable DNA ligase from Mycobacterium bovis (strain ATCC BAA-935 / AF2122/97).